The chain runs to 150 residues: Anthranilate synthase component 1 (150 aa).

Position 40 (Ser40) interacts with L-tryptophan. Arg119 contacts chorismate.

Belongs to the anthranilate synthase component I family. In terms of assembly, heterotetramer consisting of two non-identical subunits: a beta subunit (TrpG) and a large alpha subunit (TrpE). It depends on Mg(2+) as a cofactor.

The enzyme catalyses chorismate + L-glutamine = anthranilate + pyruvate + L-glutamate + H(+). It functions in the pathway amino-acid biosynthesis; L-tryptophan biosynthesis; L-tryptophan from chorismate: step 1/5. With respect to regulation, feedback inhibited by tryptophan. Its function is as follows. Part of a heterotetrameric complex that catalyzes the two-step biosynthesis of anthranilate, an intermediate in the biosynthesis of L-tryptophan. In the first step, the glutamine-binding beta subunit (TrpG) of anthranilate synthase (AS) provides the glutamine amidotransferase activity which generates ammonia as a substrate that, along with chorismate, is used in the second step, catalyzed by the large alpha subunit of AS (TrpE) to produce anthranilate. In the absence of TrpG, TrpE can synthesize anthranilate directly from chorismate and high concentrations of ammonia. In Citrobacter freundii, this protein is Anthranilate synthase component 1 (trpE).